A 102-amino-acid polypeptide reads, in one-letter code: Large ribosomal subunit protein bL21 (102 aa).

The protein belongs to the bacterial ribosomal protein bL21 family. Part of the 50S ribosomal subunit. Contacts protein L20.

Its function is as follows. This protein binds to 23S rRNA in the presence of protein L20. This chain is Large ribosomal subunit protein bL21, found in Exiguobacterium sp. (strain ATCC BAA-1283 / AT1b).